Reading from the N-terminus, the 277-residue chain is MTFSGHTARKRFGQHWLINERVLDRIVEAAELQDGDRVLEVGPGRGALTERLLASAAAAIHAVELDRDLVAGLQQTFASHPKFSLQEGDVLSVPLELSGGVPANKVVANIPYNITGPLLDRLIGRLDRPVDFSYQRLVLLVQHEVAQRIRARPGHSNFSALSVRMQLLGRCSHVCPVPPRCFQPPPKVQSEVICIDPFPPERRPTAALSRGVERLLKMAFLSRRKMLRNTLAPVGSTDLLQSLAEEAGISLQQRPQDVAPEAWVALAKGLNQVDSVA.

6 residues coordinate S-adenosyl-L-methionine: His-15, Leu-17, Gly-42, Glu-64, Asp-89, and Asn-109.

The protein belongs to the class I-like SAM-binding methyltransferase superfamily. rRNA adenine N(6)-methyltransferase family. RsmA subfamily.

The protein resides in the cytoplasm. The catalysed reaction is adenosine(1518)/adenosine(1519) in 16S rRNA + 4 S-adenosyl-L-methionine = N(6)-dimethyladenosine(1518)/N(6)-dimethyladenosine(1519) in 16S rRNA + 4 S-adenosyl-L-homocysteine + 4 H(+). In terms of biological role, specifically dimethylates two adjacent adenosines (A1518 and A1519) in the loop of a conserved hairpin near the 3'-end of 16S rRNA in the 30S particle. May play a critical role in biogenesis of 30S subunits. This chain is Ribosomal RNA small subunit methyltransferase A, found in Synechococcus sp. (strain CC9311).